The primary structure comprises 160 residues: uncharacterized protein (160 aa).

This is an uncharacterized protein from Lactobacillus helveticus (Lactobacillus suntoryeus).